The following is a 388-amino-acid chain: Galactokinase (388 aa).

33–36 (EHTD) is a binding site for substrate. ATP is bound by residues S67 and 125–131 (GAGLSSS). Mg(2+) contacts are provided by S131 and E163. D175 functions as the Proton acceptor in the catalytic mechanism. A substrate-binding site is contributed by Y225.

The protein belongs to the GHMP kinase family. GalK subfamily.

It localises to the cytoplasm. The catalysed reaction is alpha-D-galactose + ATP = alpha-D-galactose 1-phosphate + ADP + H(+). The protein operates within carbohydrate metabolism; galactose metabolism. Its function is as follows. Catalyzes the transfer of the gamma-phosphate of ATP to D-galactose to form alpha-D-galactose-1-phosphate (Gal-1-P). This Limosilactobacillus fermentum (strain NBRC 3956 / LMG 18251) (Lactobacillus fermentum) protein is Galactokinase.